The chain runs to 583 residues: Aspartate--tRNA ligase (583 aa).

Glu-174 contributes to the L-aspartate binding site. The segment at 198-201 is aspartate; it reads QITK. Arg-220 lines the L-aspartate pocket. ATP is bound by residues 220–222 and Gln-229; that span reads RDE. His-443 contributes to the L-aspartate binding site. An ATP-binding site is contributed by Glu-477. Residue Arg-484 participates in L-aspartate binding. Position 529–532 (529–532) interacts with ATP; that stretch reads GLDR.

This sequence belongs to the class-II aminoacyl-tRNA synthetase family. Type 1 subfamily. Homodimer.

Its subcellular location is the cytoplasm. It catalyses the reaction tRNA(Asp) + L-aspartate + ATP = L-aspartyl-tRNA(Asp) + AMP + diphosphate. Functionally, catalyzes the attachment of L-aspartate to tRNA(Asp) in a two-step reaction: L-aspartate is first activated by ATP to form Asp-AMP and then transferred to the acceptor end of tRNA(Asp). The polypeptide is Aspartate--tRNA ligase (Streptococcus thermophilus (strain ATCC BAA-491 / LMD-9)).